The chain runs to 216 residues: Octanoyltransferase (216 aa).

The 180-residue stretch at 33-212 (AHTPDELWLV…ILSNILGLTA (180 aa)) folds into the BPL/LPL catalytic domain. Substrate contacts are provided by residues 72–79 (RGGQVTYH), 139–141 (SLG), and 152–154 (GVA). Cys170 serves as the catalytic Acyl-thioester intermediate.

The protein belongs to the LipB family.

Its subcellular location is the cytoplasm. It catalyses the reaction octanoyl-[ACP] + L-lysyl-[protein] = N(6)-octanoyl-L-lysyl-[protein] + holo-[ACP] + H(+). Its pathway is protein modification; protein lipoylation via endogenous pathway; protein N(6)-(lipoyl)lysine from octanoyl-[acyl-carrier-protein]: step 1/2. Catalyzes the transfer of endogenously produced octanoic acid from octanoyl-acyl-carrier-protein onto the lipoyl domains of lipoate-dependent enzymes. Lipoyl-ACP can also act as a substrate although octanoyl-ACP is likely to be the physiological substrate. The chain is Octanoyltransferase from Saccharophagus degradans (strain 2-40 / ATCC 43961 / DSM 17024).